Consider the following 64-residue polypeptide: Small ribosomal subunit protein eS17 (64 aa).

The protein belongs to the eukaryotic ribosomal protein eS17 family.

The sequence is that of Small ribosomal subunit protein eS17 from Methanocorpusculum labreanum (strain ATCC 43576 / DSM 4855 / Z).